The chain runs to 26 residues: Toxin b subunit alpha (26 aa).

Toxin b is a heterodimer composed of toxin alpha and toxin beta. In terms of tissue distribution, expressed by the venom gland.

The protein resides in the secreted. Binds to sodium channels (Nav) and affects the channel activation process. This Androctonus crassicauda (Arabian fat-tailed scorpion) protein is Toxin b subunit alpha.